The sequence spans 97 residues: Aspartyl/glutamyl-tRNA(Asn/Gln) amidotransferase subunit C (97 aa).

The protein belongs to the GatC family. Heterotrimer of A, B and C subunits.

The catalysed reaction is L-glutamyl-tRNA(Gln) + L-glutamine + ATP + H2O = L-glutaminyl-tRNA(Gln) + L-glutamate + ADP + phosphate + H(+). It catalyses the reaction L-aspartyl-tRNA(Asn) + L-glutamine + ATP + H2O = L-asparaginyl-tRNA(Asn) + L-glutamate + ADP + phosphate + 2 H(+). Functionally, allows the formation of correctly charged Asn-tRNA(Asn) or Gln-tRNA(Gln) through the transamidation of misacylated Asp-tRNA(Asn) or Glu-tRNA(Gln) in organisms which lack either or both of asparaginyl-tRNA or glutaminyl-tRNA synthetases. The reaction takes place in the presence of glutamine and ATP through an activated phospho-Asp-tRNA(Asn) or phospho-Glu-tRNA(Gln). This is Aspartyl/glutamyl-tRNA(Asn/Gln) amidotransferase subunit C from Clostridium botulinum (strain Eklund 17B / Type B).